The following is a 411-amino-acid chain: Dual-specificity RNA methyltransferase RlmN (411 aa).

The Proton acceptor role is filled by glutamate 125. The 250-residue stretch at 131–380 (EEGRGTLCIS…IRTPRGRDIL (250 aa)) folds into the Radical SAM core domain. A disulfide bridge links cysteine 138 with cysteine 383. [4Fe-4S] cluster is bound by residues cysteine 145, cysteine 149, and cysteine 152. S-adenosyl-L-methionine is bound by residues 209-210 (GE), serine 241, 263-265 (SLH), and asparagine 340. Residue cysteine 383 is the S-methylcysteine intermediate of the active site.

It belongs to the radical SAM superfamily. RlmN family. The cofactor is [4Fe-4S] cluster.

It localises to the cytoplasm. The enzyme catalyses adenosine(2503) in 23S rRNA + 2 reduced [2Fe-2S]-[ferredoxin] + 2 S-adenosyl-L-methionine = 2-methyladenosine(2503) in 23S rRNA + 5'-deoxyadenosine + L-methionine + 2 oxidized [2Fe-2S]-[ferredoxin] + S-adenosyl-L-homocysteine. It carries out the reaction adenosine(37) in tRNA + 2 reduced [2Fe-2S]-[ferredoxin] + 2 S-adenosyl-L-methionine = 2-methyladenosine(37) in tRNA + 5'-deoxyadenosine + L-methionine + 2 oxidized [2Fe-2S]-[ferredoxin] + S-adenosyl-L-homocysteine. Its function is as follows. Specifically methylates position 2 of adenine 2503 in 23S rRNA and position 2 of adenine 37 in tRNAs. m2A2503 modification seems to play a crucial role in the proofreading step occurring at the peptidyl transferase center and thus would serve to optimize ribosomal fidelity. The sequence is that of Dual-specificity RNA methyltransferase RlmN from Brucella abortus (strain S19).